The primary structure comprises 179 residues: UPF0227 protein Shew185_2404 (179 aa).

It belongs to the UPF0227 family.

The chain is UPF0227 protein Shew185_2404 from Shewanella baltica (strain OS185).